A 494-amino-acid chain; its full sequence is UPF0371 protein stu1377 (494 aa).

It belongs to the UPF0371 family.

The chain is UPF0371 protein stu1377 from Streptococcus thermophilus (strain ATCC BAA-250 / LMG 18311).